We begin with the raw amino-acid sequence, 734 residues long: Regulator of G-protein signaling rgs-6 (734 aa).

A disordered region spans residues 1 to 24 (MSTPCSGNEPATPTNTSPNNETSN). The segment covering 8 to 24 (NEPATPTNTSPNNETSN) has biased composition (low complexity). The RGS domain occupies 46-157 (IFKKVIRDPV…YDCWPRFLRS (112 aa)). Disordered regions lie at residues 162–236 (QPSF…SPTH), 489–515 (HAVS…YSPA), and 538–734 (VNAG…AAYV). Over residues 166 to 176 (TDEELAADDED) the composition is skewed to acidic residues. A compositionally biased stretch (polar residues) spans 180–191 (HSQPTSLNNTNE). Low complexity predominate over residues 194–208 (AAAQQSQPAPNAPAA). 2 stretches are compositionally biased toward polar residues: residues 494–506 (SDPN…SQDR) and 538–557 (VNAG…SKNR). 2 stretches are compositionally biased toward basic and acidic residues: residues 563-585 (SKTE…RSDD) and 606-619 (TTEE…KSGD). Residues 642-694 (AAAAAAGASPSTSAPSTSTSVQTKTTTSPTKSPTSTTITTSGTTTSATSSVAT) are compositionally biased toward low complexity. 2 stretches are compositionally biased toward polar residues: residues 705–715 (SASTPATSSQL) and 724–734 (RESSWQTAAYV).

This is Regulator of G-protein signaling rgs-6 from Caenorhabditis elegans.